We begin with the raw amino-acid sequence, 201 residues long: Glutathione peroxidase 1 (201 aa).

A Phosphoserine modification is found at Ser32. Residue Sec47 is part of the active site. Position 47 (Sec47) is a non-standard amino acid, selenocysteine. N6-acetyllysine; alternate occurs at positions 86, 112, and 146. An N6-succinyllysine; alternate mark is found at Lys86, Lys112, and Lys146. Phosphoserine occurs at positions 195 and 199.

It belongs to the glutathione peroxidase family. Homotetramer. Interacts with MIEN1. Post-translationally, during periods of oxidative stress, Sec-47 may react with a superoxide radical, irreversibly lose hydroselenide and be converted to dehydroalanine.

Its subcellular location is the cytoplasm. It localises to the mitochondrion. The enzyme catalyses 2 glutathione + H2O2 = glutathione disulfide + 2 H2O. It catalyses the reaction a hydroperoxy polyunsaturated fatty acid + 2 glutathione = a hydroxy polyunsaturated fatty acid + glutathione disulfide + H2O. The catalysed reaction is tert-butyl hydroperoxide + 2 glutathione = tert-butanol + glutathione disulfide + H2O. It carries out the reaction cumene hydroperoxide + 2 glutathione = 2-phenylpropan-2-ol + glutathione disulfide + H2O. The enzyme catalyses (13S)-hydroperoxy-(9Z,11E)-octadecadienoate + 2 glutathione = (13S)-hydroxy-(9Z,11E)-octadecadienoate + glutathione disulfide + H2O. It catalyses the reaction (9S)-hydroperoxy-(10E,12Z)-octadecadienoate + 2 glutathione = (9S)-hydroxy-(10E,12Z)-octadecadienoate + glutathione disulfide + H2O. The catalysed reaction is (5S)-hydroperoxy-(6E,8Z,11Z,14Z)-eicosatetraenoate + 2 glutathione = (5S)-hydroxy-(6E,8Z,11Z,14Z)-eicosatetraenoate + glutathione disulfide + H2O. It carries out the reaction (12S)-hydroperoxy-(5Z,8Z,10E,14Z)-eicosatetraenoate + 2 glutathione = (12S)-hydroxy-(5Z,8Z,10E,14Z)-eicosatetraenoate + glutathione disulfide + H2O. The enzyme catalyses (12R)-hydroperoxy-(5Z,8Z,10E,14Z)-eicosatetraenoate + 2 glutathione = (12R)-hydroxy-(5Z,8Z,10E,14Z)-eicosatetraenoate + glutathione disulfide + H2O. It catalyses the reaction (15S)-hydroperoxy-(5Z,8Z,11Z,13E)-eicosatetraenoate + 2 glutathione = (15S)-hydroxy-(5Z,8Z,11Z,13E)-eicosatetraenoate + glutathione disulfide + H2O. The catalysed reaction is (5S)-hydroperoxy-(6E,8Z,11Z,14Z,17Z)-eicosapentaenoate + 2 glutathione = (5S)-hydroxy-(6E,8Z,11Z,14Z,17Z)-eicosapentaenoate + glutathione disulfide + H2O. It carries out the reaction (12S)-hydroperoxy-(5Z,8Z,10E,14Z,17Z)-eicosapentaenoate + 2 glutathione = (12S)-hydroxy-(5Z,8Z,10E,14Z,17Z)-eicosapentaenoate + glutathione disulfide + H2O. The enzyme catalyses (15S)-hydroperoxy-(5Z,8Z,11Z,13E,17Z)-eicosapentaenoate + 2 glutathione = (15S)-hydroxy-(5Z,8Z,11Z,13E,17Z)-eicosapentaenoate + glutathione disulfide + H2O. It catalyses the reaction (15S)-hydroperoxy-(11Z,13E)-eicosadienoate + 2 glutathione = (15S)-hydroxy-(11Z,13E)-eicosadienoate + glutathione disulfide + H2O. The catalysed reaction is (17S)-hydroperoxy-(4Z,7Z,10Z,13Z,15E,19Z)-docosahexaenoate + 2 glutathione = (17S)-hydroxy-(4Z,7Z,10Z,13Z,15E,19Z)-docosahexaenoate + glutathione disulfide + H2O. In terms of biological role, catalyzes the reduction of hydroperoxides in a glutathione-dependent manner thus regulating cellular redox homeostasis. Can reduce small soluble hydroperoxides such as H2O2, cumene hydroperoxide and tert-butyl hydroperoxide, as well as several fatty acid-derived hydroperoxides. In platelets catalyzes the reduction of 12-hydroperoxyeicosatetraenoic acid, the primary product of the arachidonate 12-lipoxygenase pathway. This is Glutathione peroxidase 1 (GPX1) from Macaca fuscata fuscata (Japanese macaque).